We begin with the raw amino-acid sequence, 201 residues long: dITP/XTP pyrophosphatase (201 aa).

Substrate is bound at residue 9 to 14 (TRNSGK). Residues Glu-42 and Asp-71 each coordinate Mg(2+). Residue Asp-71 is the Proton acceptor of the active site. Substrate contacts are provided by residues Ser-72, 156–159 (FGYD), Lys-178, and 183–184 (HR).

The protein belongs to the HAM1 NTPase family. Homodimer. Mg(2+) serves as cofactor.

The enzyme catalyses XTP + H2O = XMP + diphosphate + H(+). It catalyses the reaction dITP + H2O = dIMP + diphosphate + H(+). It carries out the reaction ITP + H2O = IMP + diphosphate + H(+). Its function is as follows. Pyrophosphatase that catalyzes the hydrolysis of nucleoside triphosphates to their monophosphate derivatives, with a high preference for the non-canonical purine nucleotides XTP (xanthosine triphosphate), dITP (deoxyinosine triphosphate) and ITP. Seems to function as a house-cleaning enzyme that removes non-canonical purine nucleotides from the nucleotide pool, thus preventing their incorporation into DNA/RNA and avoiding chromosomal lesions. The protein is dITP/XTP pyrophosphatase (ynbD) of Lactococcus lactis subsp. lactis (strain IL1403) (Streptococcus lactis).